Consider the following 484-residue polypeptide: Probable glycine dehydrogenase (decarboxylating) subunit 2 (484 aa).

Lys264 carries the post-translational modification N6-(pyridoxal phosphate)lysine.

The protein belongs to the GcvP family. C-terminal subunit subfamily. The glycine cleavage system is composed of four proteins: P, T, L and H. In this organism, the P 'protein' is a heterodimer of two subunits. It depends on pyridoxal 5'-phosphate as a cofactor.

The enzyme catalyses N(6)-[(R)-lipoyl]-L-lysyl-[glycine-cleavage complex H protein] + glycine + H(+) = N(6)-[(R)-S(8)-aminomethyldihydrolipoyl]-L-lysyl-[glycine-cleavage complex H protein] + CO2. Functionally, the glycine cleavage system catalyzes the degradation of glycine. The P protein binds the alpha-amino group of glycine through its pyridoxal phosphate cofactor; CO(2) is released and the remaining methylamine moiety is then transferred to the lipoamide cofactor of the H protein. The chain is Probable glycine dehydrogenase (decarboxylating) subunit 2 from Legionella pneumophila (strain Paris).